A 407-amino-acid polypeptide reads, in one-letter code: Imidazolonepropionase (407 aa).

Residues histidine 68 and histidine 70 each contribute to the Fe(3+) site. Residues histidine 68 and histidine 70 each contribute to the Zn(2+) site. Residues arginine 77, tyrosine 140, and histidine 173 each coordinate 4-imidazolone-5-propanoate. Tyrosine 140 is a binding site for N-formimidoyl-L-glutamate. Residue histidine 238 coordinates Fe(3+). A Zn(2+)-binding site is contributed by histidine 238. Glutamine 241 is a binding site for 4-imidazolone-5-propanoate. Aspartate 313 lines the Fe(3+) pocket. Zn(2+) is bound at residue aspartate 313. N-formimidoyl-L-glutamate is bound by residues asparagine 315 and glycine 317. Residue threonine 318 coordinates 4-imidazolone-5-propanoate.

This sequence belongs to the metallo-dependent hydrolases superfamily. HutI family. Zn(2+) is required as a cofactor. The cofactor is Fe(3+).

It localises to the cytoplasm. It carries out the reaction 4-imidazolone-5-propanoate + H2O = N-formimidoyl-L-glutamate. It participates in amino-acid degradation; L-histidine degradation into L-glutamate; N-formimidoyl-L-glutamate from L-histidine: step 3/3. Catalyzes the hydrolytic cleavage of the carbon-nitrogen bond in imidazolone-5-propanoate to yield N-formimidoyl-L-glutamate. It is the third step in the universal histidine degradation pathway. In Burkholderia mallei (strain ATCC 23344), this protein is Imidazolonepropionase.